We begin with the raw amino-acid sequence, 93 residues long: MPKSKVRKKNDFTVSAVSRTPVKVKVGPSSVWFVALFIGLMLIGLVWLMVFQLAAVGSQAPTALNWMAQLGPWNYAIAFAFMITGLLLTMRWH.

The next 2 membrane-spanning stretches (helical) occupy residues 31-51 (VWFVALFIGLMLIGLVWLMVF) and 70-90 (LGPWNYAIAFAFMITGLLLTM).

Belongs to the CrgA family.

It is found in the cell membrane. In terms of biological role, involved in cell division. This chain is Cell division protein CrgA, found in Mycobacterium avium (strain 104).